Here is a 113-residue protein sequence, read N- to C-terminus: MDGRVQLIKALLALPIRPATRRWRNPIPFPETFDGDTDRLPEFIVQTGSYMFVDENTFSSDALKVTFLITRLTGPALQWVIPYIKKESPLLNDYRGFLAEMKRVFGWEEDEDF.

Belongs to the FAM127 family.

The polypeptide is Retrotransposon Gag-like protein 8C (Homo sapiens (Human)).